The following is a 466-amino-acid chain: Vimentin (466 aa).

Low complexity-rich tracts occupy residues 1-13 (MSTR…SYRR) and 20-31 (TASRPSSSRSYV). The segment at 1-31 (MSTRTVSSSSYRRMFGGPGTASRPSSSRSYV) is disordered. Position 2 is an N-acetylserine (serine 2). Residues 2–95 (STRTVSSSSY…FSLADAINTE (94 aa)) are head. Serine 7 bears the Phosphoserine; alternate mark. Serine 7 carries an O-linked (GlcNAc) serine; alternate glycan. Residues serine 8, serine 9, and serine 10 each carry the phosphoserine modification. The residue at position 20 (threonine 20) is a Phosphothreonine. Residues serine 25 and serine 26 each carry the phosphoserine modification. An O-linked (GlcNAc) threonine glycan is attached at threonine 33. O-linked (GlcNAc) serine; alternate glycosylation is present at serine 34. Serine 34 carries the phosphoserine; by PKC; alternate modification. Serine 39 bears the Phosphoserine; by CaMK2, PKA, PKC and ROCK2 mark. Serine 42, serine 47, serine 49, and serine 51 each carry phosphoserine. The residue at position 53 (tyrosine 53) is a Phosphotyrosine. Serine 55 bears the Phosphoserine mark. The residue at position 56 (serine 56) is a Phosphoserine; by CDK5 and CDK1. Tyrosine 61 is subject to Phosphotyrosine. The residue at position 66 (serine 66) is a Phosphoserine. Phosphoserine; by AURKB and ROCK2 is present on serine 72. Phosphoserine occurs at positions 73 and 87. The tract at residues 96 to 131 (FKNTRTNEKVELQELNDRFANYIDKVRFLEQQNKIL) is coil 1A. A coiled-coil region spans residues 96–131 (FKNTRTNEKVELQELNDRFANYIDKVRFLEQQNKIL). The IF rod domain maps to 103-411 (EKVELQELND…KLLEGEESRI (309 aa)). A Glycyl lysine isopeptide (Lys-Gly) (interchain with G-Cter in SUMO2) cross-link involves residue lysine 104. At tyrosine 117 the chain carries Phosphotyrosine. N6-acetyllysine; alternate occurs at positions 120, 129, and 139. N6-succinyllysine; alternate is present on residues lysine 120 and lysine 129. Glycyl lysine isopeptide (Lys-Gly) (interchain with G-Cter in SUMO2); alternate cross-links involve residues lysine 120, lysine 129, and lysine 139. Residues 132–153 (LAELEQLKGQGKSRLGDLYEEE) form a linker 1 region. Position 144 is a phosphoserine (serine 144). A coiled-coil region spans residues 154–245 (MRELRRQVDQ…KLHDEEIQEL (92 aa)). The coil 1B stretch occupies residues 154–245 (MRELRRQVDQ…KLHDEEIQEL (92 aa)). Lysine 168 carries the N6-acetyllysine modification. The residue at position 188 (lysine 188) is an N6-acetyllysine; alternate. N6-succinyllysine; alternate is present on lysine 188. Serine 214 carries the post-translational modification Phosphoserine. An N6-acetyllysine; alternate modification is found at lysine 223. Lysine 223 participates in a covalent cross-link: Glycyl lysine isopeptide (Lys-Gly) (interchain with G-Cter in SUMO2); alternate. At serine 226 the chain carries Phosphoserine. Position 235 is an N6-acetyllysine (lysine 235). A linker 12 region spans residues 246–268 (QAQIQEQHVQIDMDVSKPDLTAA). Lysine 262 participates in a covalent cross-link: Glycyl lysine isopeptide (Lys-Gly) (interchain with G-Cter in SUMO2). The coil 2 stretch occupies residues 269–407 (LRDVRQQYES…ATYRKLLEGE (139 aa)). Lysine 294 carries the post-translational modification N6-acetyllysine; alternate. Position 294 is an N6-succinyllysine; alternate (lysine 294). Lysine 294 is covalently cross-linked (Glycyl lysine isopeptide (Lys-Gly) (interchain with G-Cter in SUMO2); alternate). A Phosphoserine modification is found at serine 299. Residues 303–407 (NRNNDALRQA…ATYRKLLEGE (105 aa)) adopt a coiled-coil conformation. A Glycyl lysine isopeptide (Lys-Gly) (interchain with G-Cter in SUMO2) cross-link involves residue lysine 313. Serine 325 carries the post-translational modification Phosphoserine. A [IL]-x-C-x-x-[DE] motif motif is present at residues 326 to 329 (LTCE). Residue lysine 373 is modified to N6-acetyllysine; alternate. Lysine 373 participates in a covalent cross-link: Glycyl lysine isopeptide (Lys-Gly) (interchain with G-Cter in SUMO2); alternate. Residues 408–466 (ESRISLPLPNFSSLNLRETNLESLPLVDTHSKRTLLIKTVETRDGQVINETSQHHDDLE) are tail. Residues serine 409, serine 412, serine 419, and serine 420 each carry the phosphoserine modification. The residue at position 426 (threonine 426) is a Phosphothreonine. A Phosphoserine modification is found at serine 430. The residue at position 436 (threonine 436) is a Phosphothreonine. A Phosphoserine modification is found at serine 438. Residue lysine 439 forms a Glycyl lysine isopeptide (Lys-Gly) (interchain with G-Cter in SUMO2) linkage. Lysine 445 bears the N6-acetyllysine; alternate mark. An N6-succinyllysine; alternate modification is found at lysine 445. Residue lysine 445 forms a Glycyl lysine isopeptide (Lys-Gly) (interchain with G-Cter in SUMO2); alternate linkage. A Glycyl lysine isopeptide (Lys-Gly) (interchain with G-Cter in SUMO1); alternate cross-link involves residue lysine 445. 2 positions are modified to phosphothreonine: threonine 446 and threonine 458. Serine 459 carries the phosphoserine modification.

This sequence belongs to the intermediate filament family. In terms of assembly, homomer assembled from elementary dimers. Identified in complexes that contain VIM, EZR, AHNAK, BFSP1, BFSP2, ANK2, PLEC, PRX and spectrin. Interacts with BCAS3. Interacts with LGSN. Interacts with SYNM. Interacts (via rod region) with PLEC (via CH 1 domain). Interacts with STK33. Interacts with LARP6. Interacts with RAB8B. Interacts with TOR1A; the interaction associates TOR1A with the cytoskeleton. Interacts with TOR1AIP1. Interacts with TOR1AIP1. Interacts with DIAPH1. Interacts with EPPK1; interaction is dependent of higher-order structure of intermediate filament. Interacts with the non-receptor tyrosine kinase SRMS; the interaction leads to phosphorylation of VIM. Interacts with NOD2. Interacts (via head region) with CORO1C. Interacts with HDGF. Interacts with PRKCE (via phorbol-ester/DAG-type 2 domain). Interacts with BFSP2. Interacts with PPL. Interacts with PKP1 and PKP2. Interacts with SCRIB (via PDZ domains); the interaction protects SCRIB from proteasomal degradation and facilitates SCRIB localization to intermediate filaments, the interaction is reduced by cell contact inhibition. In terms of processing, one of the most prominent phosphoproteins in various cells of mesenchymal origin. Phosphorylation is enhanced during cell division, at which time vimentin filaments are significantly reorganized. Phosphorylation by PKN1 inhibits the formation of filaments. Filament disassembly during mitosis is promoted by phosphorylation at Ser-55 as well as by nestin. Phosphorylated at Ser-56 by CDK5 during neutrophil secretion in the cytoplasm. Phosphorylated by STK33. Phosphorylated on tyrosine residues by SRMS. S-nitrosylation is induced by interferon-gamma and oxidatively-modified low-densitity lipoprotein (LDL(ox)) possibly implicating the iNOS-S100A8/9 transnitrosylase complex.

The protein resides in the cytoplasm. The protein localises to the cytoskeleton. Its subcellular location is the nucleus matrix. It localises to the cell membrane. In terms of biological role, vimentins are class-III intermediate filaments found in various non-epithelial cells, especially mesenchymal cells. Vimentin is attached to the nucleus, endoplasmic reticulum, and mitochondria, either laterally or terminally. Plays a role in cell directional movement, orientation, cell sheet organization and Golgi complex polarization at the cell migration front. Protects SCRIB from proteasomal degradation and facilitates its localization to intermediate filaments in a cell contact-mediated manner. Involved with LARP6 in the stabilization of type I collagen mRNAs for CO1A1 and CO1A2. This is Vimentin (VIM) from Sus scrofa (Pig).